Here is a 689-residue protein sequence, read N- to C-terminus: Bifunctional protein GAL10 (689 aa).

Positions 1–345 (MSYILVTGGA…TTKNPFGFQI (345 aa)) are galactowaldenase. 3 to 34 (YILVTGGAGYIGSHTVVELVNNGYNVVVVDNL) contributes to the NAD(+) binding site. Positions 346–689 (NNYSWTKFDS…SYTIYRFENF (344 aa)) are mutarotase. Residue H534 is the For mutarotase activity of the active site.

It in the N-terminal section; belongs to the NAD(P)-dependent epimerase/dehydratase family. In the C-terminal section; belongs to the aldose epimerase family. It depends on NAD(+) as a cofactor.

It carries out the reaction UDP-alpha-D-glucose = UDP-alpha-D-galactose. The enzyme catalyses alpha-D-glucose = beta-D-glucose. It functions in the pathway carbohydrate metabolism; galactose metabolism. It participates in carbohydrate metabolism; hexose metabolism. Mutarotase converts alpha-aldose to the beta-anomer. It is active on D-glucose, L-arabinose, D-xylose, D-galactose, maltose and lactose. The polypeptide is Bifunctional protein GAL10 (GAL10) (Pachysolen tannophilus (Yeast)).